The primary structure comprises 288 residues: Glycine--tRNA ligase alpha subunit (288 aa).

Belongs to the class-II aminoacyl-tRNA synthetase family. Tetramer of two alpha and two beta subunits.

It localises to the cytoplasm. It carries out the reaction tRNA(Gly) + glycine + ATP = glycyl-tRNA(Gly) + AMP + diphosphate. The polypeptide is Glycine--tRNA ligase alpha subunit (Rickettsia peacockii (strain Rustic)).